Reading from the N-terminus, the 298-residue chain is Proline iminopeptidase (298 aa).

Positions 26-277 (VLLLHGGPAM…NGSHLAMWDD (252 aa)) constitute an AB hydrolase-1 domain. The Nucleophile role is filled by serine 103. Residue aspartate 244 is part of the active site. Residue histidine 271 is the Proton donor of the active site.

It belongs to the peptidase S33 family. In terms of assembly, monomer.

The enzyme catalyses Release of N-terminal proline from a peptide.. Releases the N-terminal proline from various substrates. Cleaves specifically Pro-betaNA and small peptides containing proline at the amino terminal. No activity against hydroxyproline-betaNA. The chain is Proline iminopeptidase (fpaP) from Elizabethkingia meningoseptica (Chryseobacterium meningosepticum).